The following is a 188-amino-acid chain: Ras-related protein Rap-1 (188 aa).

10 to 17 lines the GTP pocket; it reads GSGGVGKS. Positions 32–40 match the Effector region motif; that stretch reads YDPTIEDSY. GTP contacts are provided by residues 57-61 and 116-119; these read DTAGT and NKCD.

It belongs to the small GTPase superfamily. Ras family.

The catalysed reaction is GTP + H2O = GDP + phosphate + H(+). Required in the hypodermis for proper formation of the cuticle. The sequence is that of Ras-related protein Rap-1 (rap-1) from Caenorhabditis elegans.